The chain runs to 170 residues: uncharacterized protein (170 aa).

A helical transmembrane segment spans residues 96 to 116 (FSAISIGSFPIVLFLSLFFFD).

Its subcellular location is the membrane. This is an uncharacterized protein from Borreliella burgdorferi (strain ATCC 35210 / DSM 4680 / CIP 102532 / B31) (Borrelia burgdorferi).